A 413-amino-acid chain; its full sequence is MTRMLDLGLFLAGLLTVKGLLQDRDAPDMYDSPVRVQEWRGKKDARQLARHNMEFGFKLLQRLASNSPQGNIFLSPLSISTAFSMLSLGAQNSTLEEIREGFNFKEMSNWDVHAAFHYLLHKLNQETEDTKMNLGNALFMDQKLRPQQRFLNLAKNVYDADMVLTNFQDLENTQKDINRYISQKTHSRIKNMVKSIDPGTVMILTNYIYFRGRWQYEFDPKQTKEEEFFIEKGKTVKVPMMFQRGLYDMAYDSQLSCTILEIPYRGNITATFVLPDNGKLKLLEQGLQADIFAKWKSLLSKRVVDVWVPKLRISSTYNMKKVLSRLGISKIFEENGDLTRISSHRSLKVGEAVHKAELKMDEKGMEGAAGSGAQTLPMETPRHMKLDRPFLMMIYENFMPSMVFLARIYDPSG.

Positions 1–20 (MTRMLDLGLFLAGLLTVKGL) are cleaved as a signal peptide. Asn92 and Asn267 each carry an N-linked (GlcNAc...) asparagine glycan. Residues 364-382 (GMEGAAGSGAQTLPMETPR) are reactive center loop.

This sequence belongs to the serpin family. In terms of assembly, forms a stable complex with KLK7. Glycosylation slightly decreases affinity for heparin, but otherwise has no significant effect on KLK7 inhibitory activity or thermal stability of the protein. As to expression, expressed in visceral adipose tissues.

Its subcellular location is the secreted. With respect to regulation, inhibition of KLK7 is enhanced by heparin. In terms of biological role, adipokine that modulates insulin action by specifically inhibiting its target protease KLK7 in white adipose tissues. This Mus musculus (Mouse) protein is Serpin A12 (Serpina12).